A 309-amino-acid polypeptide reads, in one-letter code: Glutaminase 2 (309 aa).

7 residues coordinate substrate: S65, N117, E162, N169, Y193, Y245, and V263.

This sequence belongs to the glutaminase family. Homotetramer.

It catalyses the reaction L-glutamine + H2O = L-glutamate + NH4(+). The polypeptide is Glutaminase 2 (Bacillus subtilis (strain 168)).